Reading from the N-terminus, the 45-residue chain is Thymosin beta (45 aa).

The interval 1–45 (MADKPNMTEITSFDKTKLRKTETQEKNPLPTKETIEQERQGESTP) is disordered. 2 stretches are compositionally biased toward basic and acidic residues: residues 12–25 (SFDK…ETQE) and 33–45 (ETIE…ESTP).

Belongs to the thymosin beta family.

Its subcellular location is the cytoplasm. It localises to the cytoskeleton. Plays an important role in the organization of the cytoskeleton. Binds to and sequesters actin monomers (G actin) and therefore inhibits actin polymerization. The polypeptide is Thymosin beta (tmsb) (Danio rerio (Zebrafish)).